The chain runs to 376 residues: MAKLHLQWLLLLPTLCSLGAATESASSPDCAQGPKFWCQSLEQAIQCRALGHCLQEVWGHAGANDLCQECEDIVHLLTKMTKEDAFQDTIRKFLEQECDILPLKLLVPRCRQVLDVYLPLVIDYFQGQIKPKAICSHVGLCPLGQTKPEQKPEMLDAIPNPLLNKLVLPALPGAFLARPGPHTQDLSEQQLPIPLPFCWLCRTLIKRVQAVIPKGVLAVAVSQVCHVVPLVVGGICQCLAERYTVLLLDALLGRVVPQLVCGLVLRCSTADAIGPALPALEPLIEKWPLQDTECHFCKSVINQAWNTSEQAMPQAMHQACLRFWLDRQKCEQFVEQHMPQLLALVPRSQDAHTSCQALGVCEAPASPLQCFQTPHL.

An N-terminal signal peptide occupies residues 1-24 (MAKLHLQWLLLLPTLCSLGAATES). In terms of domain architecture, Saposin A-type spans 25–63 (ASSPDCAQGPKFWCQSLEQAIQCRALGHCLQEVWGHAGA). A propeptide spanning residues 25–190 (ASSPDCAQGP…PHTQDLSEQQ (166 aa)) is cleaved from the precursor. Saposin B-type domains follow at residues 63–145 (ANDL…PLGQ), 194–271 (PLPF…STAD), and 290–365 (QDTE…EAPA). Disulfide bonds link Cys67–Cys141, Cys70–Cys135, Cys98–Cys110, Cys198–Cys267, Cys201–Cys261, Cys225–Cys236, Cys294–Cys361, Cys297–Cys355, and Cys320–Cys330. The propeptide occupies 270–376 (ADAIGPALPA…PLQCFQTPHL (107 aa)). An N-linked (GlcNAc...) asparagine glycan is attached at Asn306.

In terms of assembly, homodimer; disulfide-linked.

The protein localises to the secreted. It localises to the extracellular space. It is found in the surface film. Pulmonary surfactant-associated proteins promote alveolar stability by lowering the surface tension at the air-liquid interface in the peripheral air spaces. SP-B increases the collapse pressure of palmitic acid to nearly 70 millinewtons per meter. The sequence is that of Pulmonary surfactant-associated protein B (Sftpb) from Rattus norvegicus (Rat).